The chain runs to 94 residues: Surfactant-associated protein 3 (94 aa).

Found in lung alveolar cells type I and II, as well as alveolar macrophages (at protein level). Detected also in testis and kidney. Expressed by different tissues of the ocular system like cornea, conjuctiva, lacrimal gland, eyelid and efferent tear ducts (at protein level). From these tissues is secreted into the tear film (at protein level).

It localises to the cytoplasm. The protein resides in the secreted. Putative surfactant protein. May be involved in wound healing and in the reduction of the surface tension at the ocular surface. The chain is Surfactant-associated protein 3 (SFTA3) from Homo sapiens (Human).